Consider the following 225-residue polypeptide: 2-C-methyl-D-erythritol 4-phosphate cytidylyltransferase (225 aa).

It belongs to the IspD/TarI cytidylyltransferase family. IspD subfamily.

The catalysed reaction is 2-C-methyl-D-erythritol 4-phosphate + CTP + H(+) = 4-CDP-2-C-methyl-D-erythritol + diphosphate. It functions in the pathway isoprenoid biosynthesis; isopentenyl diphosphate biosynthesis via DXP pathway; isopentenyl diphosphate from 1-deoxy-D-xylulose 5-phosphate: step 2/6. In terms of biological role, catalyzes the formation of 4-diphosphocytidyl-2-C-methyl-D-erythritol from CTP and 2-C-methyl-D-erythritol 4-phosphate (MEP). In Clostridium perfringens (strain ATCC 13124 / DSM 756 / JCM 1290 / NCIMB 6125 / NCTC 8237 / Type A), this protein is 2-C-methyl-D-erythritol 4-phosphate cytidylyltransferase.